Consider the following 264-residue polypeptide: uncharacterized protein (264 aa).

2 disordered regions span residues 1 to 52 (MPRS…AVPG) and 123 to 207 (GGRW…PWTR). Low complexity predominate over residues 29-40 (AAHPTTSPTAAS). Residues 144–154 (HFQSSGAQQES) are compositionally biased toward polar residues. The segment covering 188-197 (ARKSACKCPR) has biased composition (basic residues).

This is an uncharacterized protein from Homo sapiens (Human).